A 67-amino-acid polypeptide reads, in one-letter code: ATP synthase F(0) complex subunit 8 (67 aa).

Residues 8–24 (TWFITITSMIMTLFILF) form a helical membrane-spanning segment. Lysine 54 carries the N6-acetyllysine; alternate modification. Residue lysine 54 is modified to N6-succinyllysine; alternate. The residue at position 57 (lysine 57) is an N6-acetyllysine.

It belongs to the ATPase protein 8 family. In terms of assembly, component of the ATP synthase complex composed at least of ATP5F1A/subunit alpha, ATP5F1B/subunit beta, ATP5MC1/subunit c (homooctomer), MT-ATP6/subunit a, MT-ATP8/subunit 8, ATP5ME/subunit e, ATP5MF/subunit f, ATP5MG/subunit g, ATP5MK/subunit k, ATP5MJ/subunit j, ATP5F1C/subunit gamma, ATP5F1D/subunit delta, ATP5F1E/subunit epsilon, ATP5PF/subunit F6, ATP5PB/subunit b, ATP5PD/subunit d, ATP5PO/subunit OSCP. ATP synthase complex consists of a soluble F(1) head domain (subunits alpha(3) and beta(3)) - the catalytic core - and a membrane F(0) domain - the membrane proton channel (subunits c, a, 8, e, f, g, k and j). These two domains are linked by a central stalk (subunits gamma, delta, and epsilon) rotating inside the F1 region and a stationary peripheral stalk (subunits F6, b, d, and OSCP). Interacts with PRICKLE3.

It is found in the mitochondrion membrane. In terms of biological role, subunit 8, of the mitochondrial membrane ATP synthase complex (F(1)F(0) ATP synthase or Complex V) that produces ATP from ADP in the presence of a proton gradient across the membrane which is generated by electron transport complexes of the respiratory chain. ATP synthase complex consist of a soluble F(1) head domain - the catalytic core - and a membrane F(1) domain - the membrane proton channel. These two domains are linked by a central stalk rotating inside the F(1) region and a stationary peripheral stalk. During catalysis, ATP synthesis in the catalytic domain of F(1) is coupled via a rotary mechanism of the central stalk subunits to proton translocation. In vivo, can only synthesize ATP although its ATP hydrolase activity can be activated artificially in vitro. Part of the complex F(0) domain. The sequence is that of ATP synthase F(0) complex subunit 8 from Sus scrofa (Pig).